The primary structure comprises 370 residues: A-type ATP synthase subunit C (370 aa).

The protein belongs to the V-ATPase V0D/AC39 subunit family. Has multiple subunits with at least A(3), B(3), C, D, E, F, H, I and proteolipid K(x).

The protein resides in the cell membrane. In terms of biological role, component of the A-type ATP synthase that produces ATP from ADP in the presence of a proton gradient across the membrane. The chain is A-type ATP synthase subunit C from Pyrococcus abyssi (strain GE5 / Orsay).